The primary structure comprises 629 residues: MFYQDNFDVIVIGGGHAGTEAALAAARTGQNTLLLTHNIDTLGQMSCNPAIGGIGKGHLVKEVDALGGLMAQAIDHSGIQFRTLNASKGPAVRATRAQADRALYKAYVRSVLENQPNLTLFQQAVDDLIIENDKVMGAVTQMGLKFRAKSVVLTAGTFLGGQIHIGMENFSGGRAGDPSSITLAQRLRERPFRIDRLKTGTPPRIDARSVDFSGLEAQPGDNPTPVFSFLGKREHHPQQVNCFITHTNEKTHDVIRNNLDRSPMYAGVIEGIGPRYCPSIEDKVMRFADKDSHQIFIEPEGLSTHELYPNGISTSLPFDVQLQIVRSMKGFENAHIVRPGYAIEYDFFDPRDLKSTYETKFIEGLFFAGQINGTTGYEEAAAQGLMAGLNASLFAQGKEGWSPRRDEAYMGVLIDDLSTLGTKEPYRMFTSRAEYRLLLREDNADLRLTEQGRTLGLVDDVRWARFNEKVENMEQERQRLKDIWINPKSEQVDQVNAILKTPIAREASGEDLLRRPEVNYQSLVSIDGFGPALEDSQASEQVEIQVKYAGYIQRQRDEIEKSLRHENTKLPFDLDYKEVKGLSNEVVAKLSDAKPETIGIASRISGITPAAISILLVHLKKHGLLKKGE.

FAD-binding positions include 13 to 18 (GGGHAG), Val-125, and Ser-180. 273–287 (GPRYCPSIEDKVMRF) provides a ligand contact to NAD(+). An FAD-binding site is contributed by Gln-370.

Belongs to the MnmG family. As to quaternary structure, homodimer. Heterotetramer of two MnmE and two MnmG subunits. FAD serves as cofactor.

The protein resides in the cytoplasm. Its function is as follows. NAD-binding protein involved in the addition of a carboxymethylaminomethyl (cmnm) group at the wobble position (U34) of certain tRNAs, forming tRNA-cmnm(5)s(2)U34. The chain is tRNA uridine 5-carboxymethylaminomethyl modification enzyme MnmG from Aliivibrio fischeri (strain ATCC 700601 / ES114) (Vibrio fischeri).